The primary structure comprises 423 residues: MESLKRWNEERGLWCEKGVQVLLTTIGAFSAFGLMTIAISTDYWLYTRALICNTTNLTAGDDGPPHRGGSGSSEKKDPGGLTHSGLWRICCLEGLKRGVCVKINHFPEDTDYDHDSAEYLLRVVRASSIFPILSAILLLLGGVCVAASRVYKSKRNIILGAGILFVAAGLSNIIGVIVYISANAGEPGPKRDEEKKNHYSYGWSFYFGGLSFILAEVIGVLAVNIYIERSREAHCQSRSDLLKAGGGAGGSGGSGPSAILRLPSYRFRYRRRSRSSSRGSSEASPSRDASPGGPGGPGFASTDISMYTLSRDPSKGSVAAGLASAGGGGSGAGVGAYGGAAGAAGGGGAGSERDRGSSAGFLTLHNAFPKEAASGVTVTVTGPPAAPAPAPAPPAPAAPAPGTLSKEAAASNTNTLNRKTTPV.

4 helical membrane-spanning segments follow: residues 19–39, 127–147, 157–177, and 207–227; these read VQVLLTTIGAFSAFGLMTIAI, SSIFPILSAILLLLGGVCVAA, IILGAGILFVAAGLSNIIGVI, and FGGLSFILAEVIGVLAVNIYI. Phosphoserine is present on residues Ser251 and Ser254. Residues 271–304 are disordered; sequence RRSRSSSRGSSEASPSRDASPGGPGGPGFASTDI. Residues 276-287 are compositionally biased toward low complexity; the sequence is SSRGSSEASPSR. Residues 318–338 form a helical membrane-spanning segment; that stretch reads VAAGLASAGGGGSGAGVGAYG. Disordered stretches follow at residues 342–363 and 378–423; these read GAAGGGGAGSERDRGSSAGFLT and VTVT…TTPV. The span at 384 to 399 shows a compositional bias: pro residues; the sequence is PAAPAPAPAPPAPAAP. Residues 410–423 are compositionally biased toward polar residues; sequence ASNTNTLNRKTTPV.

This sequence belongs to the PMP-22/EMP/MP20 family. CACNG subfamily. As to quaternary structure, interacts with CACNA1C. Identified in a complex with the L-type calcium channel subunits CACNA1C, CACNA2D1 and either CACNB1 or CACNB2. Acts as an auxiliary subunit for AMPA-selective glutamate receptors (AMPARs). Found in a complex with GRIA1, GRIA2, GRIA3, GRIA4, CNIH2, CNIH3, CACNG2, CACNG3, CACNG4, CACNG5 and CACNG7. Interacts with CNIH2. Found in a complex with GRIA1, GRIA2, GRIA3, GRIA4, DLG4 and CNIH2. Palmitoylated. Probably palmitoylated by ZDHHC3 and ZDHHC7.

The protein localises to the cell membrane. It is found in the postsynaptic density membrane. In terms of biological role, regulates the activity of L-type calcium channels that contain CACNA1C as pore-forming subunit. Regulates the trafficking and gating properties of AMPA-selective glutamate receptors (AMPARs). Promotes their targeting to the cell membrane and synapses and modulates their gating properties by slowing their rates of activation, deactivation and desensitization and by mediating their resensitization. Does not show subunit-specific AMPA receptor regulation and regulates all AMPAR subunits. Thought to stabilize the calcium channel in an inactivated (closed) state. This Mus musculus (Mouse) protein is Voltage-dependent calcium channel gamma-8 subunit.